The chain runs to 103 residues: Large ribosomal subunit protein bL21 (103 aa).

This sequence belongs to the bacterial ribosomal protein bL21 family. Part of the 50S ribosomal subunit. Contacts protein L20.

Its function is as follows. This protein binds to 23S rRNA in the presence of protein L20. The polypeptide is Large ribosomal subunit protein bL21 (Pseudomonas paraeruginosa (strain DSM 24068 / PA7) (Pseudomonas aeruginosa (strain PA7))).